We begin with the raw amino-acid sequence, 615 residues long: ABC transporter G family member 22 (615 aa).

One can recognise an ABC transporter domain in the interval 31 to 279; sequence ITFKDLAYSV…EIGFPFPDQT (249 aa). Position 67–74 (67–74) interacts with ATP; it reads GPSGSGKT. The ABC transmembrane type-2 domain occupies 364–610; it reads SNCLVRFAVA…TMVFLCLHYF (247 aa). 6 helical membrane passes run 370–390, 400–420, 442–462, 477–497, 508–528, and 587–607; these read FAVA…LGMD, VLFY…SLFI, LALM…LGTI, FFAM…MLII, FAVG…FVPI, and INLI…FLCL.

Belongs to the ABC transporter superfamily. ABCG family. Eye pigment precursor importer (TC 3.A.1.204) subfamily.

The protein localises to the membrane. In terms of biological role, may be involved in cell migration. The chain is ABC transporter G family member 22 (abcG22) from Dictyostelium discoideum (Social amoeba).